A 483-amino-acid polypeptide reads, in one-letter code: Probable gamma-aminobutyrate transaminase 4 (483 aa).

138–139 (GS) lines the pyridoxal 5'-phosphate pocket. Residue Tyr-171 coordinates substrate. Asp-278 is a pyridoxal 5'-phosphate binding site. Lys-307 contacts substrate. Position 307 is an N6-(pyridoxal phosphate)lysine (Lys-307).

The protein belongs to the class-III pyridoxal-phosphate-dependent aminotransferase family. As to expression, not detected in roots, stems, flowers or leaves of healthy plants.

The protein localises to the cytoplasm. It carries out the reaction 4-aminobutanoate + pyruvate = succinate semialdehyde + L-alanine. The catalysed reaction is 4-aminobutanoate + glyoxylate = succinate semialdehyde + glycine. Transaminase that degrades gamma-amino butyric acid (GABA). The protein is Probable gamma-aminobutyrate transaminase 4 (GABA-T) of Oryza sativa subsp. japonica (Rice).